A 313-amino-acid chain; its full sequence is Antiviral protein I (313 aa).

The signal sequence occupies residues 1 to 22 (MKSMLVVTISIWLILAPTSTWA). 2 cysteine pairs are disulfide-bonded: Cys-56/Cys-281 and Cys-107/Cys-128. Tyr-94 is a catalytic residue. A substrate-binding site is contributed by Val-95. Ser-143 is a substrate binding site. Residue Tyr-145 is part of the active site. Residue Ser-197 participates in substrate binding. Residues Glu-198 and Arg-201 contribute to the active site. Arg-201 lines the substrate pocket. A propeptide spanning residues 286-313 (NQNAMFPQLIMSTYYNYMVNLGDLFEGF) is cleaved from the precursor.

Belongs to the ribosome-inactivating protein family. Type 1 RIP subfamily. Monomer. In terms of tissue distribution, expressed in spring leaves (at protein level). Expressed in roots (at protein level).

The enzyme catalyses Endohydrolysis of the N-glycosidic bond at one specific adenosine on the 28S rRNA.. Its function is as follows. Possesses antiviral potency. Inhibits viral infection of plants (tobacco mosaic virus). Inhibits protein synthesis. Releases both adenine and guanine from Escherichia coli rRNA in vitro. Activity on guanine is 20 times slower than that on adenine. This Phytolacca americana (American pokeweed) protein is Antiviral protein I (PAP1).